We begin with the raw amino-acid sequence, 137 residues long: Transcription antitermination protein NusB (137 aa).

It belongs to the NusB family.

Its function is as follows. Involved in transcription antitermination. Required for transcription of ribosomal RNA (rRNA) genes. Binds specifically to the boxA antiterminator sequence of the ribosomal RNA (rrn) operons. This is Transcription antitermination protein NusB from Aeromonas salmonicida (strain A449).